The chain runs to 637 residues: 1-deoxy-D-xylulose-5-phosphate synthase (637 aa).

Thiamine diphosphate is bound by residues His-76 and 117 to 119; that span reads GHS. Asp-148 lines the Mg(2+) pocket. Residues 149 to 150, Asn-177, Tyr-294, and Glu-381 each bind thiamine diphosphate; that span reads GA. Asn-177 is a Mg(2+) binding site.

The protein belongs to the transketolase family. DXPS subfamily. In terms of assembly, homodimer. Mg(2+) is required as a cofactor. It depends on thiamine diphosphate as a cofactor.

The enzyme catalyses D-glyceraldehyde 3-phosphate + pyruvate + H(+) = 1-deoxy-D-xylulose 5-phosphate + CO2. Its pathway is metabolic intermediate biosynthesis; 1-deoxy-D-xylulose 5-phosphate biosynthesis; 1-deoxy-D-xylulose 5-phosphate from D-glyceraldehyde 3-phosphate and pyruvate: step 1/1. Its function is as follows. Catalyzes the acyloin condensation reaction between C atoms 2 and 3 of pyruvate and glyceraldehyde 3-phosphate to yield 1-deoxy-D-xylulose-5-phosphate (DXP). This chain is 1-deoxy-D-xylulose-5-phosphate synthase, found in Neisseria meningitidis serogroup B (strain ATCC BAA-335 / MC58).